The following is a 584-amino-acid chain: MNATQEKLKVQLEQALVAAFGADFAGVDPILVSASNPKFGDYQANVALSLSKKLGKQPRAIAGAIVEKLDVSEICEPPEIAGPGFINLKLKTAYLEAQLNDIQADPRLGVPAAKTPKRENVDFSSPNIAKEMHVGHLRSTIIGDSIARILEFQGHDVLRLNHVGDWGTQFGMLIAYLREVYPDALTTANALDIGDLVSFYRKAKQRFDTDTAFQETARQEVVRLQAGAEDTLHAWKLLCEQSRREFQVIYELLDIKLTERGESFYNPLLSGIVEDLEKSGLLVENQGAKCVFLEGFTNREGEPLPLIVQKSDGGYNYATTDLASLRYRIQQDQAKRIIYVTDAGQGNHFAQFFQVARKAGWIPDDVELVHVPFGLVLGEDGKKFKTRSGDTVRLRDLLDEAVSHAHADLKTRLQKEERQETEEFINEVARVVGISAVKYADLSQNRTSNYIFSYDKMLDLKGNTAPYMLYVYARIHGISRKGDINFKELGNNAVLLQHETELALAKYLLQLDEVISSVEQDLLPNRLCEYLFELSQKFNQFYDRCSILQAEEPQRTSRLVLCDLTARTLKLGLSLLGIQVLERM.

A 'HIGH' region motif is present at residues 126 to 136; sequence PNIAKEMHVGH.

Belongs to the class-I aminoacyl-tRNA synthetase family. As to quaternary structure, monomer.

The protein localises to the cytoplasm. It catalyses the reaction tRNA(Arg) + L-arginine + ATP = L-arginyl-tRNA(Arg) + AMP + diphosphate. This chain is Arginine--tRNA ligase, found in Nostoc punctiforme (strain ATCC 29133 / PCC 73102).